A 150-amino-acid polypeptide reads, in one-letter code: MQLVHVLVVLLSVVAHAKKFFIPNLKANWHKAHEFCISLDMNMVSVESPKDHDELVQFVRKTDKFSNATRFWLGASDLAEEGVYTWVSSSRLMTFTNWAENEPSSTEAENCVEMIHNTYVNRIWTWNDIDCRGFKAYIVCEERQSIAQFR.

The first 17 residues, 1 to 17 (MQLVHVLVVLLSVVAHA), serve as a signal peptide directing secretion. The C-type lectin domain occupies 18 to 140 (KKFFIPNLKA…CRGFKAYIVC (123 aa)). N67 carries N-linked (GlcNAc...) asparagine glycosylation. A disulfide bridge links C111 with C131.

As to quaternary structure, interacts with putative receptor-type tyrosine-protein phosphatase mosPTP-1; the interaction probably mediates the recruitment of Japanese encephalitis virus particles in complex with C-type lectin mosGCTL-7 to the cell surface. (Microbial infection) Interacts with envelope protein E (glycosylated) of Japanese encephalitis virus in a calcium-dependent manner.

Its subcellular location is the secreted. Functionally, carbohydrate-binding protein. Its function is as follows. (Microbial infection) Facilitates Japanese encephalitis virus infection in mosquitoes probably via capturing viral particles and presenting them to a ligand on the cell surface, thereby facilitating viral entry. This chain is C-type lectin mosGCTL-7, found in Aedes aegypti (Yellowfever mosquito).